We begin with the raw amino-acid sequence, 248 residues long: Type II restriction enzyme XhoI (248 aa).

Belongs to the XhoI type II restriction endonuclease family.

It carries out the reaction Endonucleolytic cleavage of DNA to give specific double-stranded fragments with terminal 5'-phosphates.. Functionally, a P subtype restriction enzyme that recognizes the double-stranded sequence 5'-CTCGAG-3' and cleaves after C-1. The polypeptide is Type II restriction enzyme XhoI (Xanthomonas vasicola).